The chain runs to 335 residues: Biotin synthase (335 aa).

Residues Phe-47–Arg-276 enclose the Radical SAM core domain. Residues Cys-65, Cys-69, and Cys-72 each coordinate [4Fe-4S] cluster. Residues Cys-109, Cys-141, Cys-201, and Arg-271 each coordinate [2Fe-2S] cluster.

Belongs to the radical SAM superfamily. Biotin synthase family. As to quaternary structure, homodimer. [4Fe-4S] cluster is required as a cofactor. [2Fe-2S] cluster serves as cofactor.

The enzyme catalyses (4R,5S)-dethiobiotin + (sulfur carrier)-SH + 2 reduced [2Fe-2S]-[ferredoxin] + 2 S-adenosyl-L-methionine = (sulfur carrier)-H + biotin + 2 5'-deoxyadenosine + 2 L-methionine + 2 oxidized [2Fe-2S]-[ferredoxin]. The protein operates within cofactor biosynthesis; biotin biosynthesis; biotin from 7,8-diaminononanoate: step 2/2. Catalyzes the conversion of dethiobiotin (DTB) to biotin by the insertion of a sulfur atom into dethiobiotin via a radical-based mechanism. This Bacillus subtilis (strain 168) protein is Biotin synthase.